The following is a 314-amino-acid chain: MKTIYLHHPITTDEWTDINKVMALGFFDGVHLGHQAVIKQAKQIAGQKGLQTAVLTFDPHPSVVLSNIRKQVKYLTPLEDKAEKMAKLGVDIMYVVRFTTQFSELSPQAFVDNYLVALHVEHVVAGFDYSYGKKGEGKMTDLAKYADGRFEVTIVDKQTAASDKISSTNIRRAITEGELEEANQLLGYPYTTKGTVIHGDKRGRTIGFPTANIRVNEDYLIPKLGVYAVKFRVNGETHLGMASIGYNITFKDDQALSIEVYILDFHREIYGEEAEIKWYQFFRPELKFNGVEGLIAQLEKDEQDTRAFFAKLED.

It belongs to the RibF family.

The enzyme catalyses riboflavin + ATP = FMN + ADP + H(+). The catalysed reaction is FMN + ATP + H(+) = FAD + diphosphate. It participates in cofactor biosynthesis; FAD biosynthesis; FAD from FMN: step 1/1. Its pathway is cofactor biosynthesis; FMN biosynthesis; FMN from riboflavin (ATP route): step 1/1. In terms of biological role, catalyzes the phosphorylation of riboflavin to FMN followed by the adenylation of FMN to FAD. Can also catalyze the phosphorylation of the toxic riboflavin analogs 8-demethyl-8-aminoriboflavin (AF) to 8-demethyl-8-aminoriboflavin mononucleotide (AFMN) and roseoflavin (RoF) to roseoflavin mononucleotide (RoFMN), and the adenylation of AFMN to 8-demethyl-8-aminoriboflavin adenine dinucleotide (AFAD). The polypeptide is Bifunctional riboflavin kinase/FMN adenylyltransferase (Listeria monocytogenes serovar 1/2a (strain ATCC BAA-679 / EGD-e)).